The sequence spans 263 residues: MRIFRPWRLRCPALHLPSLSVFPLRWKLPSLTTDKTMCKSVTTDEWKKVFYEKMEEAKPADSWDLIIDPNLKHNVLSPGWKQYVELHASGRFHCSWCWHTWQSPHLVILFHMFLDRAQRAGSVRMRVFKQLCYECGSARLDESSMLEENIEGLVDNLITSLREQCYGERGGQYRIHVASRQDNRRHRGEFCEACQEGIVHWKPSEKLLEEEATTYTFSRAPSPTKPQDETGSGWNFCSIPWCLFWATVLLLIIYLQLSFRSSV.

Residues 1–238 lie on the Cytoplasmic side of the membrane; sequence MRIFRPWRLR…ETGSGWNFCS (238 aa). The segment at 88–197 adopts a 3CxxC-type zinc-finger fold; it reads ASGRFHCSWC…GEFCEACQEG (110 aa). Residues 239 to 259 form a helical membrane-spanning segment; that stretch reads IPWCLFWATVLLLIIYLQLSF. Over 260-263 the chain is Extracellular; sequence RSSV.

Belongs to the TMEM7 family. Interacts with olfactory receptors.

The protein resides in the cell membrane. In terms of biological role, specifically promotes functional cell surface expression of olfactory receptors, but not of other GPCRs. This is Receptor-transporting protein 1 (RTP1) from Macaca fascicularis (Crab-eating macaque).